The following is a 73-amino-acid chain: Large ribosomal subunit protein bL31 (73 aa).

C16, C18, C36, and C39 together coordinate Zn(2+).

Belongs to the bacterial ribosomal protein bL31 family. Type A subfamily. As to quaternary structure, part of the 50S ribosomal subunit. Requires Zn(2+) as cofactor.

In terms of biological role, binds the 23S rRNA. In Citrifermentans bemidjiense (strain ATCC BAA-1014 / DSM 16622 / JCM 12645 / Bem) (Geobacter bemidjiensis), this protein is Large ribosomal subunit protein bL31.